The chain runs to 284 residues: 2-dehydro-3-deoxyphosphooctonate aldolase (284 aa).

This sequence belongs to the KdsA family.

Its subcellular location is the cytoplasm. The enzyme catalyses D-arabinose 5-phosphate + phosphoenolpyruvate + H2O = 3-deoxy-alpha-D-manno-2-octulosonate-8-phosphate + phosphate. Its pathway is carbohydrate biosynthesis; 3-deoxy-D-manno-octulosonate biosynthesis; 3-deoxy-D-manno-octulosonate from D-ribulose 5-phosphate: step 2/3. It participates in bacterial outer membrane biogenesis; lipopolysaccharide biosynthesis. In Escherichia coli O6:H1 (strain CFT073 / ATCC 700928 / UPEC), this protein is 2-dehydro-3-deoxyphosphooctonate aldolase.